We begin with the raw amino-acid sequence, 1492 residues long: Cystic fibrosis transmembrane conductance regulator (1492 aa).

Over 1 to 78 (MQRSPIEKAN…KLVNALRRCF (78 aa)) the chain is Cytoplasmic. A helical transmembrane segment spans residues 79–99 (FWRFLFYGILLYFVEFTKAVQ). One can recognise an ABC transmembrane type-1 1 domain in the interval 82–366 (FLFYGILLYF…SAIQTWYDSL (285 aa)). Residues 100 to 123 (PLCLGRIIASYNAKNTYEREIAYY) lie on the Extracellular side of the membrane. The chain crosses the membrane as a helical span at residues 124–147 (LALGLCLLFVVRTLFLHPAVFGLQ). The Cytoplasmic portion of the chain corresponds to 148-196 (HLGMQMRIALFSLIYKKILKMSSRVLDKIDTGQLVSLLSNNLNKFDEGV). Residues 197-217 (AVAHFVWIAPVQVVLLMGLIW) form a helical membrane-spanning segment. Topologically, residues 218–223 (NELTEF) are extracellular. Residues 224–244 (VFCGLGFLIMLALFQAWLGKK) traverse the membrane as a helical segment. Residues 245–299 (MMQYRDKRAGKINERLAITSEIIDNIQSVKVYCWEDAMEKIIDDIRQVELKLTRK) are Cytoplasmic-facing. A helical transmembrane segment spans residues 300-320 (VAYCRYFSSSAFFFSGFFVVF). Residues 321–340 (LSVVPYAFIHTIKLRRIFTT) are Extracellular-facing. A helical membrane pass occupies residues 341 to 359 (ISYNIVLRMTVTRQFPSAI). The Cytoplasmic portion of the chain corresponds to 360–867 (QTWYDSLGAI…YLRYVTTNRN (508 aa)). ATP contacts are provided by residues tryptophan 402, serine 435, 459–466 (GSTGSGKS), and glutamine 494. Residues 424–647 (NGDDGLFFSN…KPDFSSQLLG (224 aa)) form the ABC transporter 1 domain. A disordered R region region spans residues 655–840 (SAERRNSILT…EEINEEDLKE (186 aa)). Residues 868 to 888 (LVFVLILCLVIFLAEVAASLA) form a helical membrane-spanning segment. The region spanning 868–1169 (LVFVLILCLV…AVNSSIDVDG (302 aa)) is the ABC transmembrane type-1 2 domain. At 889 to 932 (GLWIISGLAINTGSQTNDTSTDLSHLSVFSKFITNGSHYYIFYI) the chain is on the extracellular side. N-linked (GlcNAc...) asparagine glycans are attached at residues asparagine 905 and asparagine 923. Residues 933–953 (YVGLADSFLALGVIRGLPLVH) form a discontinuously helical membrane-spanning segment. Residues 954 to 1004 (TLVTVSKDLHKQMLHSVLQGPMTAFNKMKAGRILNRFIKDTAIIDDMLPLT) are Cytoplasmic-facing. A helical transmembrane segment spans residues 1005–1025 (VFDFVQLILIVVGAICVVSVL). Residues 1026 to 1027 (QP) are Extracellular-facing. Residues 1028–1048 (YTLLAAIPVAVIFIMLRAYFL) traverse the membrane as a helical segment. Over 1049-1109 (RTSQQLKQLE…TANWFLYLST (61 aa)) the chain is Cytoplasmic. A helical transmembrane segment spans residues 1110 to 1130 (LRWFQMRIDIVFVLFFIAVTF). Residues 1131 to 1144 (IAIATHDVGEGQVG) are Extracellular-facing. The chain crosses the membrane as a helical span at residues 1145 to 1165 (IILTLAMNITSTLQWAVNSSI). Residues 1166-1492 (DVDGLMRSVS…AEEDLQETRL (327 aa)) lie on the Cytoplasmic side of the membrane. Positions 1220–1453 (MMVNNLTAKY…ASLFKQVFGH (234 aa)) constitute an ABC transporter 2 domain. Residues tyrosine 1229 and 1254-1261 (GRTGAGKS) contribute to the ATP site. A compositionally biased stretch (basic residues) spans 1465–1474 (RNSSKRKTRP). The disordered stretch occupies residues 1465–1492 (RNSSKRKTRPKISALQEEAEEDLQETRL). Over residues 1481-1492 (EEAEEDLQETRL) the composition is skewed to acidic residues. The PDZ-binding motif lies at 1483–1485 (AEE).

It belongs to the ABC transporter superfamily. ABCC family. CFTR transporter (TC 3.A.1.202) subfamily. In terms of assembly, monomer; does not require oligomerization for channel activity. May form oligomers in the membrane. Phosphorylated; cAMP treatment promotes phosphorylation and activates the channel. Dephosphorylation decreases the ATPase activity (in vitro). Phosphorylation at PKA sites activates the channel. Phosphorylation at PKC sites enhances the response to phosphorylation by PKA. Expressed in the rectal gland (at protein level).

It localises to the apical cell membrane. It is found in the early endosome membrane. The protein localises to the cell membrane. The protein resides in the recycling endosome membrane. Its subcellular location is the endoplasmic reticulum membrane. It carries out the reaction ATP + H2O + closed Cl(-) channel = ADP + phosphate + open Cl(-) channel.. It catalyses the reaction chloride(in) = chloride(out). The catalysed reaction is hydrogencarbonate(in) = hydrogencarbonate(out). The enzyme catalyses ATP + H2O = ADP + phosphate + H(+). In terms of biological role, epithelial ion channel that plays an important role in the regulation of epithelial ion and water transport and fluid homeostasis. Mediates the transport of chloride ions across the cell membrane. Possesses an intrinsic ATPase activity and utilizes ATP to gate its channel; the passive flow of anions through the channel is gated by cycles of ATP binding and hydrolysis by the ATP-binding domains. The ion channel is also permeable to HCO(3)(-); selectivity depends on the extracellular chloride concentration. Exerts its function also by modulating the activity of other ion channels and transporters. Contributes to the regulation of the pH and the ion content of the epithelial fluid layer. The sequence is that of Cystic fibrosis transmembrane conductance regulator from Squalus acanthias (Spiny dogfish).